The following is a 474-amino-acid chain: Calcium/calmodulin-dependent protein kinase type IV (474 aa).

Residues S11 and S12 each carry the phosphoserine; by autocatalysis modification. The region spanning 42–296 (FEVESELGRG…TFQALQHPWV (255 aa)) is the Protein kinase domain. ATP contacts are provided by residues 48–56 (LGRGATSIV) and K71. Residue T53 is glycosylated (O-linked (GlcNAc) threonine). S54 carries an O-linked (GlcNAc) serine glycan. A glycan (O-linked (GlcNAc) serine) is linked at S133. D160 acts as the Proton acceptor in catalysis. The O-linked (GlcNAc) serine glycan is linked to S185. T196 is subject to Phosphothreonine; by CaMKK1 and CaMKK2. The interval 297–336 (TGKAANFVHMDTAQKKLQEFNARRKLKAAVKAVVASSRLG) is autoinhibitory domain. The PP2A-binding stretch occupies residues 302–319 (NFVHMDTAQKKLQEFNAR). The segment at 318 to 337 (ARRKLKAAVKAVVASSRLGS) is calmodulin-binding. S332 carries the phosphoserine; by autocatalysis modification. The interval 336 to 474 (GSASSSHTNI…PQQDAILPEY (139 aa)) is disordered. A Phosphoserine modification is found at S337. O-linked (GlcNAc) serine glycosylation is found at S340, S341, and S352. A compositionally biased stretch (polar residues) spans 342–356 (HTNIQESNKASSEAQ). The span at 360–392 (DGKDKTDPLENKMQAGDHEAAKAAADETMKLQS) shows a compositional bias: basic and acidic residues. Positions 393-413 (EEVEEEEGVKEEEEEEEEEEE) are enriched in acidic residues. Over residues 431-454 (QEMKRNSEETLKSVEEEMDPKAEE) the composition is skewed to basic and acidic residues. S437 and S443 each carry phosphoserine.

It belongs to the protein kinase superfamily. CAMK Ser/Thr protein kinase family. CaMK subfamily. In terms of assembly, monomer. Interacts with protein phosphatase 2A (PPP2CA/PPP2CB); the interaction is mutually exclusive with binding to Ca(2+)/calmodulin. In terms of processing, phosphorylated by CaMKK1 and CaMKK2 on Thr-196. Dephosphorylated by protein phosphatase 2A. Autophosphorylated on Ser-11 and Ser-12. Glycosylation at Ser-185 modulates the phosphorylation of CaMK4 at Thr-196 and negatively regulates its activity toward CREB1 in basal conditions and during early inomycin stimulation. Post-translationally, the N-terminus of calspermin is blocked. In terms of tissue distribution, isoform 1 is expressed in brain and isoform 2 is testis specific.

The protein localises to the cytoplasm. It is found in the nucleus. It carries out the reaction L-seryl-[protein] + ATP = O-phospho-L-seryl-[protein] + ADP + H(+). It catalyses the reaction L-threonyl-[protein] + ATP = O-phospho-L-threonyl-[protein] + ADP + H(+). With respect to regulation, activated by Ca(2+)/calmodulin. Binding of calmodulin results in conformational change that relieves intrasteric autoinhibition and allows phosphorylation of Thr-196 within the activation loop by CaMKK1 or CaMKK2. Phosphorylation of Thr-196 results in a 10-20-fold increase in total activity to generate Ca(2+)/calmodulin-independent activity. Autophosphorylation of the N-terminus Ser-11 and Ser-12 is required for full activation. Inactivated by protein phosphatase 2A (PPP2CA/PPP2CB) which dephosphorylates Thr-196, thereby terminating autonomous activity and helping to maintain the enzyme in its autoinhibited state. In terms of biological role, calcium/calmodulin-dependent protein kinase that operates in the calcium-triggered CaMKK-CaMK4 signaling cascade and regulates, mainly by phosphorylation, the activity of several transcription activators, such as CREB1, MEF2D, JUN and RORA, which play pivotal roles in immune response, inflammation, and memory consolidation. In the thymus, regulates the CD4(+)/CD8(+) double positive thymocytes selection threshold during T-cell ontogeny. In CD4 memory T-cells, is required to link T-cell antigen receptor (TCR) signaling to the production of IL2, IFNG and IL4 (through the regulation of CREB and MEF2). Regulates the differentiation and survival phases of osteoclasts and dendritic cells (DCs). Mediates DCs survival by linking TLR4 and the regulation of temporal expression of BCL2. Phosphorylates the transcription activator CREB1 on 'Ser-133' in hippocampal neuron nuclei and contribute to memory consolidation and long term potentiation (LTP) in the hippocampus. Can activate the MAP kinases MAPK1/ERK2, MAPK8/JNK1 and MAPK14/p38 and stimulate transcription through the phosphorylation of ELK1 and ATF2. Can also phosphorylate in vitro CREBBP, PRM2, MEF2A and STMN1/OP18. Functionally, heat-stable, acidic, calmodulin-binding protein. In Rattus norvegicus (Rat), this protein is Calcium/calmodulin-dependent protein kinase type IV (Camk4).